A 421-amino-acid chain; its full sequence is Dihydroorotase (421 aa).

Zn(2+) is bound by residues His60 and His62. Residues 62–64 and Asn94 contribute to the substrate site; that span reads HFR. Positions 151, 178, and 231 each coordinate Zn(2+). Asn277 is a binding site for substrate. Asp304 serves as a coordination point for Zn(2+). Asp304 is an active-site residue. His308 contacts substrate.

It belongs to the metallo-dependent hydrolases superfamily. DHOase family. Class I DHOase subfamily. Zn(2+) is required as a cofactor.

The catalysed reaction is (S)-dihydroorotate + H2O = N-carbamoyl-L-aspartate + H(+). Its pathway is pyrimidine metabolism; UMP biosynthesis via de novo pathway; (S)-dihydroorotate from bicarbonate: step 3/3. Functionally, catalyzes the reversible cyclization of carbamoyl aspartate to dihydroorotate. The polypeptide is Dihydroorotase (Clostridioides difficile (strain 630) (Peptoclostridium difficile)).